Consider the following 249-residue polypeptide: Pyridoxine 5'-phosphate synthase (249 aa).

Residue asparagine 7 participates in 3-amino-2-oxopropyl phosphate binding. Residue aspartate 9–histidine 10 participates in 1-deoxy-D-xylulose 5-phosphate binding. Arginine 18 is a binding site for 3-amino-2-oxopropyl phosphate. Catalysis depends on histidine 43, which acts as the Proton acceptor. 1-deoxy-D-xylulose 5-phosphate is bound by residues arginine 45 and histidine 50. Glutamate 70 (proton acceptor) is an active-site residue. Threonine 100 is a binding site for 1-deoxy-D-xylulose 5-phosphate. Histidine 190 (proton donor) is an active-site residue. 3-amino-2-oxopropyl phosphate is bound by residues glycine 191 and glycine 212–histidine 213.

This sequence belongs to the PNP synthase family. As to quaternary structure, homooctamer; tetramer of dimers.

The protein resides in the cytoplasm. The catalysed reaction is 3-amino-2-oxopropyl phosphate + 1-deoxy-D-xylulose 5-phosphate = pyridoxine 5'-phosphate + phosphate + 2 H2O + H(+). It participates in cofactor biosynthesis; pyridoxine 5'-phosphate biosynthesis; pyridoxine 5'-phosphate from D-erythrose 4-phosphate: step 5/5. Catalyzes the complicated ring closure reaction between the two acyclic compounds 1-deoxy-D-xylulose-5-phosphate (DXP) and 3-amino-2-oxopropyl phosphate (1-amino-acetone-3-phosphate or AAP) to form pyridoxine 5'-phosphate (PNP) and inorganic phosphate. The polypeptide is Pyridoxine 5'-phosphate synthase (Synechococcus sp. (strain CC9902)).